The primary structure comprises 351 residues: Transaldolase (351 aa).

The active-site Schiff-base intermediate with substrate is the Lys138.

The protein belongs to the transaldolase family. Type 2 subfamily.

Its subcellular location is the cytoplasm. The catalysed reaction is D-sedoheptulose 7-phosphate + D-glyceraldehyde 3-phosphate = D-erythrose 4-phosphate + beta-D-fructose 6-phosphate. Its pathway is carbohydrate degradation; pentose phosphate pathway; D-glyceraldehyde 3-phosphate and beta-D-fructose 6-phosphate from D-ribose 5-phosphate and D-xylulose 5-phosphate (non-oxidative stage): step 2/3. Transaldolase is important for the balance of metabolites in the pentose-phosphate pathway. The protein is Transaldolase of Neisseria meningitidis serogroup C (strain 053442).